The primary structure comprises 443 residues: Anthocyanidin 3-O-glucoside 5-O-glucosyltransferase 2 (443 aa).

The N-terminal stretch at 1-22 is a signal peptide; sequence MVRRRVLLATFPAQGHINPALQ. His16 serves as the catalytic Proton acceptor. His16 contributes to the an anthocyanidin binding site. Gln340, His355, Trp358, Asn359, Ser360, Glu363, Asp379, and Gln380 together coordinate UDP-alpha-D-glucose.

Belongs to the UDP-glycosyltransferase family.

It catalyses the reaction an anthocyanidin 3-O-beta-D-glucoside + UDP-alpha-D-glucose = an anthocyanidin 3,5-di-O-beta-D-glucoside + UDP + 2 H(+). It functions in the pathway pigment biosynthesis; anthocyanin biosynthesis. Catalyzes the glucosylation at the O-5 position of anthocyanidin 3-glucosides to form anthocyanidin 3,5-di-O-glucosides using UDP-glucose as sugar donor. Anthocyanidin 3,5-di-O-glucosides are molecules that are responsible for pigmentation. Also acts on anthocyanidin 3-O-(6-O-malonylglucoside). Much less active with hydroxycinnamoylglucose derivatives. No activity in the absence of the 3-O-glucoside group. This is Anthocyanidin 3-O-glucoside 5-O-glucosyltransferase 2 (PF3R6) from Perilla frutescens (Beefsteak mint).